The following is a 40-amino-acid chain: Dolichyl-diphosphooligosaccharide--protein glycosyltransferase subunit 4 (40 aa).

Topologically, residues 1–4 are lumenal; the sequence is MITD. A helical transmembrane segment spans residues 5–25; that stretch reads VQLAIFSNVLGVFLFLLVVAY. The Cytoplasmic portion of the chain corresponds to 26–40; the sequence is HYINANTGKPSAKAK.

This sequence belongs to the OST4 family. As to quaternary structure, component of the oligosaccharyltransferase (OST) complex.

The protein resides in the endoplasmic reticulum membrane. Functionally, subunit of the oligosaccharyl transferase (OST) complex that catalyzes the initial transfer of a defined glycan (Glc(3)Man(9)GlcNAc(2) in eukaryotes) from the lipid carrier dolichol-pyrophosphate to an asparagine residue within an Asn-X-Ser/Thr consensus motif in nascent polypeptide chains, the first step in protein N-glycosylation. N-glycosylation occurs cotranslationally and the complex associates with the Sec61 complex at the channel-forming translocon complex that mediates protein translocation across the endoplasmic reticulum (ER). All subunits are required for a maximal enzyme activity. This Drosophila erecta (Fruit fly) protein is Dolichyl-diphosphooligosaccharide--protein glycosyltransferase subunit 4.